The chain runs to 50 residues: MAEKSTVKVDEVKLNLIEMVLRAYDPUYSCAAHIIVKDEKGNKIIEVIKE.

Sec27 and Cys30 together coordinate Ni(2+). Sec27 is a non-standard amino acid (selenocysteine). Residues 34–50 (IIVKDEKGNKIIEVIKE) constitute a propeptide, removed in mature form.

Belongs to the [NiFe]/[NiFeSe] hydrogenase large subunit family. In terms of assembly, the F420-non-reducing hydrogenase vhu is composed of four subunits; VhuA, VhuD, VhuG and VhuU. The cofactor is Ni(2+).

This is F420-non-reducing hydrogenase vhu subunit U (vhuU) from Methanocaldococcus jannaschii (strain ATCC 43067 / DSM 2661 / JAL-1 / JCM 10045 / NBRC 100440) (Methanococcus jannaschii).